Reading from the N-terminus, the 197-residue chain is MSNKKNDRRTQILQALAQMLESSPGARITTAALAKQVGVSEAALYRHFPSKAKMFEGLIEFIEESLFTRINRIVQEESNVIARIEMIVTLVLGFAEQNPGMCRLLTADALAGETERLRVRITQVFDRIETQLKQVIREADLKQGLRPAMGVAPCANFLIAIIEGKIRHYVRSEFKVKPMEIWPEQWTVLAQNLMLNR.

The HTH tetR-type domain maps to 6–66; the sequence is NDRRTQILQA…GLIEFIEESL (61 aa). Positions 29-48 form a DNA-binding region, H-T-H motif; sequence TTAALAKQVGVSEAALYRHF.

Belongs to the nucleoid occlusion factor SlmA family. In terms of assembly, homodimer. Interacts with FtsZ.

It is found in the cytoplasm. Its subcellular location is the nucleoid. Its function is as follows. Required for nucleoid occlusion (NO) phenomenon, which prevents Z-ring formation and cell division over the nucleoid. Acts as a DNA-associated cell division inhibitor that binds simultaneously chromosomal DNA and FtsZ, and disrupts the assembly of FtsZ polymers. SlmA-DNA-binding sequences (SBS) are dispersed on non-Ter regions of the chromosome, preventing FtsZ polymerization at these regions. The polypeptide is Nucleoid occlusion factor SlmA (Marinomonas sp. (strain MWYL1)).